The following is a 1981-amino-acid chain: MVNLDFEVEPCLFPSLSTRSVNQSHGKAMAYQHGFEWEVTISEDSVFQGIVLSWNILLAKYTDSTTITFGVISGSEGNKCHDDTTVDEYCTSFHPESCLPTVLPLASRRQYRFHEWKYDARINTCIANGSHKVWLDHWINSPNHGIKLILVVEQGRWPCMSLYGKPSFIDEGSVRLLCTAFQHILDCVLENQMGLLKNIEVTPSHHYQRILDWNSHIPKEPLAECIHDLIQRRCMETPDAEAICAWDGTMSYAALEQESARTMEWLQHHGVGPETIVPLLFEKSKWTVVAVLGVLKAGAAFVLLETSHPIERLKSICHDIGACIILTSALCKEIGSNLADITMSVPCDVERKLPCGDGKMKPCIRAQPRNAAYVAYTSGSTGKPKGVIIEHASFCTNAMVSSEAQNLNGCSRVLQFASYAFDVSIHETLVPLMLGGCVCIPSASQRVNSLQEAIVQLRVNWMELTPSVTRLLSPHKIPNVKTLVVGGESISPAELARWAGHIRLNVAYGPAECTVVSMVQSNVTKHGDPLSIGRGCGGSVWIVEPQNHNVLVPIGAPGELLIGGPIVGRGYLNRPEQTAAVFIQNPPWQAENNSRFYKTGDVVRQNSDGSVVFLGRKDTQVKLRGQRIELGEIEYQASGFFPGAAVAVEVGKLYHGHPALVLFVEWKSLENRKRCSGTNCCRTVQNDKTHFMSNAQWAKAGLSQILPSYMVPDIIVPLCTIPLSHSAKVDRKALRAMITRWSKDEVKLYQVTANSTSCGRYPHHAGQKYDEMVRMVARVLSLDPSEVREHDNFFQLGGDSLSAIMLSREIDTIPLLSLTVADIFQSASIAELFHRSQKTPLPESMEPGIPTKVLPFSLLDPMKIDNYRERAAEHCGVSPSQIEDIYPCSPLQARLMARTSRQPGAFQGHFNFRLSLDTDWDRLHWAWNKAADFLPILRTRIINTWQLAEGNPLQVVVRDKDIEWVEVAASESEPKSRMSFGSPLIYCVAVRAKHSPVLILNIHHALFDLVVFEQILEAVKAAYQGKPLVWRPFSPFIKYVQDLNRSQANEFWKREFTGLRAVPFPADITPGRSNLDAIRWTRKSFCLGHQNQAGITLSSLIRLAWAMVLSQYTGSLDVVFGTTVMGRNMPGTADVGGPTIATYPLRITLRGEESIKEALQRIQNHGIAIAPFEQSGIQHIRHSSPESAIACSFRNMLVIQPSSDNSLLAKRDLSPLLVLEERGSWKQKSYVNFSTQALNVVCEPGAGHLDVSAYFDQSILSSQEVEEMLSCMDRLLQLVLQHPDASMGTILSQSQSPDGDLDRYEERTSLARLEQEACQYLGNGVRVAAVWIIPMASHVPKLALFVGAMSLNTVSDGRWILAGVKEPLRTRLVQMMHEFQNNPLGRAVPFCCIPVPLQYRPSMPGLFLDRARAQEAASKFTLKTLTSWQNTGDSGFEEPLLPLEATLRRALAKVLSLEPEAIGVNDDLVSLGCDSLVAMQFAAQCDRQSLRLTISEIFQATSLRCLASTLNSRPSGDPTPALEAFALLKPMYGDRESFEQDIQRSVDGWNIKESIDAFPCTTAHLGLLSGLGTCQSHTIWEIGSPEEQIDLVSFAKAWLNLVNRHAALRTLLLPSRSNPSEWLHVVLKSSPVGVKVVTKLKNASLLKIARKPLLSRDGLGGLPYRFAVYQSTTGRTLCKLEARYAFLDAFSVLVLMKELRRILDCLPTSDPLLPSYSSWVAYLRRWSEDPLHLQFWDRYLAGLKPCILRASRNHHHHQHEGRQHHGASETNGNRPRLIKSHRQIVVQDAVALRKYCDQRELTITNILQVAWALTLKEQTGIEDICFGALVSGRDVPVDHVGNIVGSLFNVLACRIQMPATDSISSVLLENQQMMRERASHQFCSLQEVTRLVLKARPEASSLFNTCLSVEQPLSDEAETGKGFRALETVEETEYDLIVAATVFPDRIQASIMYWSYFCDPARAATIAETFAQSIERIILCA.

The adenylation stretch occupies residues 251–638; sequence SYAALEQESA…ELGEIEYQAS (388 aa). The Carrier 1 domain maps to 763–840; sequence HHAGQKYDEM…ELFHRSQKTP (78 aa). S800 is modified (O-(pantetheine 4'-phosphoryl)serine). The segment at 883–1293 is condensation 1; that stretch reads EDIYPCSPLQ…DASMGTILSQ (411 aa). The region spanning 1438–1514 is the Carrier 2 domain; it reads EPLLPLEATL…CLASTLNSRP (77 aa). An O-(pantetheine 4'-phosphoryl)serine modification is found at S1475. Residues 1586–1978 are condensation 1; the sequence is EEQIDLVSFA…TFAQSIERII (393 aa). Residues 1754 to 1774 form a disordered region; sequence HHHHQHEGRQHHGASETNGNR.

This sequence belongs to the NRP synthetase family. The cofactor is pantetheine 4'-phosphate.

The catalysed reaction is 2 L-tryptophan = cyclo(L-Trp-L-Trp) + 2 H2O. Its pathway is alkaloid biosynthesis. Nonribosomal peptide synthetase; part of the gene cluster that mediates the biosynthesis of okaramine B, a prenylated indole alkaloid that possesses an unusual octacyclic ring system, including a four-membered azetidine ring and an eight-membered azocine ring, and that exhibits insecticidal activity against silkworm larvae. Within the pathway, okaA acts as a bimodular non-ribosomal peptide synthetase (NRPS) that condenses two tryptophan molecules into cyclo(L-Trp-L-Trp). Prenylation by the prenyltransferase okaC then leads to the formation of cyclo(N8-(alpha,alpha-dimethylallyl)-L-Trp-6a-(alpha,alpha-dime-thylallyl)-L-Trp). This is followed by indole 2,3-epoxidation by the FAD-dependent monooxygenase okaB to facilitate the formation of the hexahydropyrrolo[2,3-b]indole (HPI) moiety of okaramine C. The cytochrome P450 monooxygenase okaD then likely catalyzes formation of the eight-membered ring of okaramine A. The dioxygenase okaE further forms the unusual 2-dimethyl-3-methyl-azetidine ring to yield 12-deshydroxyl okaramine E, as well as the hydroxylation of 12-deshydroxyl okaramine E to produce okaramine E. The cytochrome P450 monoxygenase okaG converts 12-deshydroxyl okaramine E into 3-desmethyl okaramine B which is further methylated by the methyltransferase okaF into okaramine B. In a shunt pathway, okaG and okaF together are also able to convert okaramine E into okaramine D. Okaramine H is produced by nonenzymatic conversion from okaramine A. This chain is Nonribosomal peptide synthetase rstn8, found in Penicillium ochrochloron.